A 1031-amino-acid polypeptide reads, in one-letter code: Error-prone DNA polymerase (1031 aa).

This sequence belongs to the DNA polymerase type-C family. DnaE2 subfamily.

It is found in the cytoplasm. The enzyme catalyses DNA(n) + a 2'-deoxyribonucleoside 5'-triphosphate = DNA(n+1) + diphosphate. Its function is as follows. DNA polymerase involved in damage-induced mutagenesis and translesion synthesis (TLS). It is not the major replicative DNA polymerase. This chain is Error-prone DNA polymerase, found in Pseudomonas savastanoi pv. phaseolicola (strain 1448A / Race 6) (Pseudomonas syringae pv. phaseolicola (strain 1448A / Race 6)).